The sequence spans 229 residues: PKHD-type hydroxylase Rpal_3968 (229 aa).

Residues Gln78 to Ser180 form the Fe2OG dioxygenase domain. His98, Asp100, and His161 together coordinate Fe cation. A 2-oxoglutarate-binding site is contributed by Arg171.

Requires Fe(2+) as cofactor. The cofactor is L-ascorbate.

This is PKHD-type hydroxylase Rpal_3968 from Rhodopseudomonas palustris (strain TIE-1).